Here is a 2144-residue protein sequence, read N- to C-terminus: Insulin-like receptor (2144 aa).

Positions 1–43 (MFNMPRGVTKSKSKRGKIKMENDMAAAATTTACTLGHICVLCR) are cleaved as a signal peptide. Residue N74 is glycosylated (N-linked (GlcNAc...) asparagine). The segment covering 174–199 (RRQHQQQHHHHYQHHHQQHHQQHHQR) has biased composition (basic residues). A disordered region spans residues 174–200 (RRQHQQQHHHHYQHHHQQHHQQHHQRQ). A glycan (N-linked (GlcNAc...) asparagine) is linked at N203. Residues 229–256 (NYKQQQQLQHNQQLPRATPQQKQQEKDR) form a disordered region. Residues 232-242 (QQQQLQHNQQL) show a composition bias toward low complexity. N265, N356, N376, N406, N468, and N509 each carry an N-linked (GlcNAc...) asparagine glycan. 8 disulfide bridges follow: C531/C539, C535/C545, C546/C554, C550/C564, C567/C576, C580/C591, C597/C618, and C635/C638. An FU repeat occupies 542 to 586 (EHTCCSQDCLGGCVIDKNGNESCISCRNVSFNNICMDSCPKGYYQ). 2 N-linked (GlcNAc...) asparagine glycosylation sites follow: N561 and N569. Residues N751, N810, N824, N839, N864, N898, N946, N1053, N1147, N1218, and N1265 are each glycosylated (N-linked (GlcNAc...) asparagine). 2 Fibronectin type-III domains span residues 825–927 (VTTK…TNPG) and 928–1026 (RPSK…EYDD). The interval 1053 to 1084 (NGSSDKSDGAEGAALDSNAIPNGGATNPSRRR) is disordered. The Fibronectin type-III 3 domain maps to 1210 to 1305 (LKVDLEHANN…EVEHIKVEPP (96 aa)). Residues 1311 to 1331 (VFFWLLGIGLAFLIVSLFGYV) traverse the membrane as a helical segment. Topologically, residues 1332 to 2144 (CYLHKRKVPS…PPNGFIGREA (813 aa)) are cytoplasmic. The tract at residues 1351–1354 (NPFY) is chico-binding. Y1354 carries the post-translational modification Phosphotyrosine; by autocatalysis. One can recognise a Protein kinase domain in the interval 1371–1659 (IIQLAPLGQG…LEPQCPNSQF (289 aa)). Residues 1377 to 1385 (LGQGSFGMV) and K1405 each bind ATP. The Proton acceptor role is filled by D1519. Phosphotyrosine; by autocatalysis occurs at positions 1545, 1549, and 1550. Disordered stretches follow at residues 1690–1724 (VPLD…DQPP), 1788–1871 (RGYE…KKTV), 1886–1962 (LFNH…ISDN), and 2020–2144 (ISHN…GREA). A Phosphoserine modification is found at S1816. Low complexity-rich tracts occupy residues 1849–1860 (STASAGSSNASS) and 1894–1916 (SNAS…NLTS). Over residues 2042 to 2062 (SDEDNEQEEDDEDEDDDVDDE) the composition is skewed to acidic residues. A compositionally biased stretch (basic and acidic residues) spans 2063-2073 (HVEHIKMERMP). Positions 2084 to 2120 (SKTQPPRSRSVSQTRKSPTNPNSGIGATGAGNRSNLL) are enriched in polar residues.

Belongs to the protein kinase superfamily. Tyr protein kinase family. Insulin receptor subfamily. Tetramer of 2 alpha and 2 beta chains linked by disulfide bonds. The alpha chains contribute to the formation of the ligand-binding domain, while the beta chains carry the kinase domain. Interacts (via C-terminal cytoplasmic region) with dock/dreadlocks (via SH2 and SH3 domains); when autophosphorylated. May interact (via beta subunit) with chico/IRS-1; this interaction may lead to tyrosine phosphorylation of the insulin receptor substrate chico. Interacts with Elp6; the interaction may stabilize Elp6. It depends on Mn(2+) as a cofactor. In terms of processing, the 280 kDa proreceptor is proteolytically processed to form a 120 kDa alpha subunit and a 170 kDa beta subunit. The beta subunit undergoes cell-specific cleavage to generate a 90 kDa beta subunit and a free 60 kDa C-terminal subunit. Both the 90 kDa and the 170 kDa beta subunits can assemble with the alpha subunits to form mature receptors. Autophosphorylated on tyrosine residues, including Tyr-1549 and Tyr-1550, in response to exogenous insulin. Tyr-1549 and Tyr-1550 are dephosphorylated by Ptp61F recruited by the dock/dreadlocks adapter protein. Post-translationally, phosphorylation of Tyr-1354 is required for Chico-binding.

The protein localises to the membrane. It is found in the cell projection. It localises to the axon. The protein resides in the growth cone membrane. The enzyme catalyses L-tyrosyl-[protein] + ATP = O-phospho-L-tyrosyl-[protein] + ADP + H(+). Its activity is regulated as follows. Activated in response to insulin. Autophosphorylation activates the kinase activity. Has a ligand-stimulated tyrosine-protein kinase activity. Binds 3 insulin-like peptide ligands. Regulates cell number and cell size during development by regulating cell growth and survival, affecting body size and organ size, including ovaries and imaginal disks. Plays a role in life-span determination. May be involved in regulation of other neuroendocrine signaling pathways. Involved in the development of the embryonic nervous system. Functions upstream of dock/dreadlocks for photoreceptor (R cell) axon guidance and targeting in the visual system. Involved in the acs mediated recovery of gut enterocytes following the cytoplasmic purge response to intestinal bacterial infection. In Drosophila melanogaster (Fruit fly), this protein is Insulin-like receptor.